Consider the following 520-residue polypeptide: AMP-binding domain-containing enzyme iboA (520 aa).

180–191 (LTSGSTSGSPKV) provides a ligand contact to ATP. The FACS motif lies at 397-447 (DGNFHTGDLFEKQLDGSYLFRGRGDDWIKSEDSRFIDTKAIEEKINDVCSD).

Belongs to the ATP-dependent AMP-binding enzyme family. The cofactor is Mg(2+).

Its pathway is secondary metabolite biosynthesis. Its function is as follows. AMP-binding domain-containing enzyme; part of the gene cluster that mediates the biosynthesis of the psychoactive metabolites ibotenic acid and muscimol. The first committed step is glutamate hydroxylation by the 2-oxoglutarate-dependent dioxygenase iboH, and the last step is decarboxylation of ibotenic acid to muscimol by the decarboxylase iboD. The order of the intermediate reactions is somewhat ambiguous. IboA likely activates the carboxylic acid at position 5 to introduce an amide bond, and the flavin monooxygenase iboF generates the N-O bond. There are several options for the latter step. One option is that iboF directly hydroxylates the amide nitrogen formed by iboA to produce a hydroxamic acid species. Another option is that iboF hydroxylates an external N-containing compound, whose resulting N-O bond is subsequently introduced into the hydroxyglutamate scaffold. The paralogous PLP-dependent cystathionine gamma-synthase-like enzymes iboG1 and iboG2 are likely involved in substitution of the OH group at position 3 by the O-N moiety. The first cyclic intermediate is most probably tricholomic acid which is likely desaturated to ibotenic acid by the cytochrome P450 monooxygenase iboC. The polypeptide is AMP-binding domain-containing enzyme iboA (Amanita muscaria (strain Koide BX008)).